Here is an 855-residue protein sequence, read N- to C-terminus: MNESFDKDFSNHTPMMQQYLKLKAQHPEILLFYRMGDFYELFYDDAKRASQLLDISLTKRGASAGEPIPMAGIPHHAVENYLAKLVNQGESVAICEQIGDPATSKGPVERKVVRIVTPGTISDEALLQERQDNLLAAIWQDGKGYGYATLDISSGRFRLSEPADRETMAAELQRTNPAELLYAEDFAEMALIEGRRGLRRRPLWEFEIDTARQQLNLQFGTRDLVGFGVENASRGLCAAGCLLQYVKDTQRTSLPHIRSITMERQQDSIIMDAATRRNLEITQNLAGGVENTLAAVLDCTVTPMGSRMLKRWLHMPVRNTDILRERQQTIGALQDTVSELQPVLRQVGDLERILARLALRTARPRDLARMRHAFQQLPELHAQLETVGSAPVQALRKKMGDFAELRDLLERAIIDAPPVLVRDGGVIAPGYHEELDEWRALADGATDYLDRLEIRERERTGLDTLKVGYNAVHGYYIQISRGQSHLAPINYVRRQTLKNAERYIIPELKEYEDKVLTSKGKALALEKQLYDELFDLLLPHLADLQQSANALAELDVLVNLAERAWTLNYTCPTFTDKPGIRITEGRHPVVEQVLNEPFIANPLNLSPQRRMLIITGPNMGGKSTYMRQTALIALLAYIGSYVPAQNVEIGPIDRIFTRVGAADDLASGRSTFMVEMTETANILHNATENSLVLMDEIGRGTSTYDGLSLAWACAENLANKIKALTLFATHYFELTQLPEKMEGVANVHLDALEHGDTIAFMHSVQDGAASKSYGLAVAALAGVPKEVIKRARQKLRELESISPNAAATQVDGTQMSLLAAPEETSPAVEALENLDPDSLTPRQALEWIYRLKSLV.

ATP is bound at residue 616–623 (GPNMGGKS).

Belongs to the DNA mismatch repair MutS family.

In terms of biological role, this protein is involved in the repair of mismatches in DNA. It is possible that it carries out the mismatch recognition step. This protein has a weak ATPase activity. In Salmonella paratyphi A (strain ATCC 9150 / SARB42), this protein is DNA mismatch repair protein MutS.